Here is a 122-residue protein sequence, read N- to C-terminus: Cofilin/actin-depolymerizing factor homolog 1 (122 aa).

The 119-residue stretch at 4–122 folds into the ADF-H domain; it reads GIRVNDNCVT…ESAQDVADLK (119 aa).

Belongs to the actin-binding proteins ADF family. As to quaternary structure, interacts with monomeric actin, does not bind to actin polymers.

Its subcellular location is the cytoplasm. It localises to the cytoskeleton. In terms of biological role, not involved in actin polymerisation, instead functions to stimulate nucleotide exchange on monomeric actin and influence turnover of the small amount of cytosolic actin microfilaments. Essential for erythrocytic schizogony. The chain is Cofilin/actin-depolymerizing factor homolog 1 from Plasmodium falciparum (isolate 3D7).